Consider the following 219-residue polypeptide: Histone H1.4 (219 aa).

The segment covering 1-15 (MSETAPAAPAAPAPA) has biased composition (low complexity). The interval 1–41 (MSETAPAAPAAPAPAEKTPVKKKARKSAGAAKRKASGPPVS) is disordered. Serine 2 is modified (N-acetylserine). The residue at position 2 (serine 2) is a Phosphoserine. The residue at position 17 (lysine 17) is an N6-acetyllysine. The residue at position 18 (threonine 18) is a Phosphothreonine. Residues 20–35 (VKKKARKSAGAAKRKA) show a composition bias toward basic residues. N6-acetyllysine; alternate is present on lysine 26. Lysine 26 is modified (N6-methyllysine; alternate). Lysine 34 is subject to N6-(beta-hydroxybutyryl)lysine; alternate. Residue lysine 34 is modified to N6-succinyllysine; alternate. Position 36 is a phosphoserine (serine 36). The 74-residue stretch at 36-109 (SGPPVSELIT…GASGSFKLNK (74 aa)) folds into the H15 domain. Lysine 52 bears the N6-(beta-hydroxybutyryl)lysine mark. Arginine 54 bears the Citrulline mark. An N6-(beta-hydroxybutyryl)lysine mark is found at lysine 64, lysine 85, lysine 90, and lysine 106. The interval 91 to 219 (GTLVQTKGTG…KPKKAPAKKK (129 aa)) is disordered. Positions 119–140 (KPKKAGAAKPKKPAGAAKKPKK) are enriched in basic residues. Threonine 146 is modified (phosphothreonine). 2 stretches are compositionally biased toward basic residues: residues 149-160 (KGAKKTPKKAKK) and 168-185 (KKAK…KKAP). Serine 187 bears the Phosphoserine mark. Positions 192–219 (KAVKPKAAKPKAAKPKTAKPKKAPAKKK) are enriched in basic residues.

Belongs to the histone H1/H5 family. Post-translationally, H1 histones are progressively phosphorylated during the cell cycle, becoming maximally phosphorylated during late G2 phase and M phase, and being dephosphorylated sharply thereafter. Acetylated at Lys-26. Deacetylated at Lys-26 by SIRT1. In terms of processing, citrullination at Arg-54 (H1R54ci) by PADI4 takes place within the DNA-binding site of H1 and results in its displacement from chromatin and global chromatin decondensation, thereby promoting pluripotency and stem cell maintenance.

The protein resides in the nucleus. It is found in the chromosome. Histone H1 protein binds to linker DNA between nucleosomes forming the macromolecular structure known as the chromatin fiber. Histones H1 are necessary for the condensation of nucleosome chains into higher-order structured fibers. Also acts as a regulator of individual gene transcription through chromatin remodeling, nucleosome spacing and DNA methylation. The polypeptide is Histone H1.4 (Oryctolagus cuniculus (Rabbit)).